The chain runs to 101 residues: Putative septation protein SpoVG (101 aa).

Residues 82–101 (ELKKGGAAPARATGTDPHED) form a disordered region.

Belongs to the SpoVG family.

Could be involved in septation. In Anaeromyxobacter dehalogenans (strain 2CP-1 / ATCC BAA-258), this protein is Putative septation protein SpoVG.